Reading from the N-terminus, the 95-residue chain is MKFLLLVLAALGFLTQVIPASGGGSKCVSDTPGYCRTHCHRGETALFMCSPFRKCCISYSFLPQPDLPQLIGNHWPSRSRNTQRKNKKQQTTVTP.

The first 22 residues, 1–22 (MKFLLLVLAALGFLTQVIPASG), serve as a signal peptide directing secretion. 3 disulfide bridges follow: Cys27–Cys55, Cys35–Cys49, and Cys39–Cys56. The interval 72–95 (GNHWPSRSRNTQRKNKKQQTTVTP) is disordered.

Belongs to the beta-defensin family.

It localises to the secreted. Functionally, has antibacterial activity. This is Beta-defensin 132 (DEFB132) from Macaca fascicularis (Crab-eating macaque).